A 431-amino-acid chain; its full sequence is Glutamate-1-semialdehyde 2,1-aminomutase (431 aa).

At K269 the chain carries N6-(pyridoxal phosphate)lysine.

This sequence belongs to the class-III pyridoxal-phosphate-dependent aminotransferase family. HemL subfamily. Homodimer. Pyridoxal 5'-phosphate serves as cofactor.

The protein localises to the cytoplasm. The catalysed reaction is (S)-4-amino-5-oxopentanoate = 5-aminolevulinate. It functions in the pathway porphyrin-containing compound metabolism; protoporphyrin-IX biosynthesis; 5-aminolevulinate from L-glutamyl-tRNA(Glu): step 2/2. In Francisella tularensis subsp. tularensis (strain SCHU S4 / Schu 4), this protein is Glutamate-1-semialdehyde 2,1-aminomutase.